The chain runs to 448 residues: Probable glycine dehydrogenase (decarboxylating) subunit 1 (448 aa).

This sequence belongs to the GcvP family. N-terminal subunit subfamily. The glycine cleavage system is composed of four proteins: P, T, L and H. In this organism, the P 'protein' is a heterodimer of two subunits.

It catalyses the reaction N(6)-[(R)-lipoyl]-L-lysyl-[glycine-cleavage complex H protein] + glycine + H(+) = N(6)-[(R)-S(8)-aminomethyldihydrolipoyl]-L-lysyl-[glycine-cleavage complex H protein] + CO2. In terms of biological role, the glycine cleavage system catalyzes the degradation of glycine. The P protein binds the alpha-amino group of glycine through its pyridoxal phosphate cofactor; CO(2) is released and the remaining methylamine moiety is then transferred to the lipoamide cofactor of the H protein. The sequence is that of Probable glycine dehydrogenase (decarboxylating) subunit 1 (gcvPA) from Bacillus subtilis (strain 168).